The primary structure comprises 729 residues: Fatty acid oxidation complex subunit alpha (729 aa).

The tract at residues 1-189 (MLYKGDTLYL…KIGLVDGVVK (189 aa)) is enoyl-CoA hydratase/isomerase. Asp-296 is a substrate binding site. Residues 311–729 (ETPKQAAVLG…ARPVGDLKTA (419 aa)) are 3-hydroxyacyl-CoA dehydrogenase. NAD(+) is bound by residues Met-324, Asp-343, 400-402 (VVE), Lys-407, and Ser-429. His-450 functions as the For 3-hydroxyacyl-CoA dehydrogenase activity in the catalytic mechanism. NAD(+) is bound at residue Asn-453. Substrate is bound by residues Asn-500 and Tyr-660. The interval 707-729 (ARHNEPYYPPVEPARPVGDLKTA) is disordered.

This sequence in the N-terminal section; belongs to the enoyl-CoA hydratase/isomerase family. The protein in the C-terminal section; belongs to the 3-hydroxyacyl-CoA dehydrogenase family. In terms of assembly, heterotetramer of two alpha chains (FadB) and two beta chains (FadA).

It carries out the reaction a (3S)-3-hydroxyacyl-CoA + NAD(+) = a 3-oxoacyl-CoA + NADH + H(+). The enzyme catalyses a (3S)-3-hydroxyacyl-CoA = a (2E)-enoyl-CoA + H2O. The catalysed reaction is a 4-saturated-(3S)-3-hydroxyacyl-CoA = a (3E)-enoyl-CoA + H2O. It catalyses the reaction (3S)-3-hydroxybutanoyl-CoA = (3R)-3-hydroxybutanoyl-CoA. It carries out the reaction a (3Z)-enoyl-CoA = a 4-saturated (2E)-enoyl-CoA. The enzyme catalyses a (3E)-enoyl-CoA = a 4-saturated (2E)-enoyl-CoA. The protein operates within lipid metabolism; fatty acid beta-oxidation. Involved in the aerobic and anaerobic degradation of long-chain fatty acids via beta-oxidation cycle. Catalyzes the formation of 3-oxoacyl-CoA from enoyl-CoA via L-3-hydroxyacyl-CoA. It can also use D-3-hydroxyacyl-CoA and cis-3-enoyl-CoA as substrate. The polypeptide is Fatty acid oxidation complex subunit alpha (Escherichia coli O6:K15:H31 (strain 536 / UPEC)).